A 380-amino-acid chain; its full sequence is Alcohol dehydrogenase 1 (380 aa).

Zn(2+)-binding residues include Cys48, Thr50, His70, Cys100, Cys103, Cys106, Cys114, and Cys178. An alcohol is bound by residues Thr50 and His70. Thr50 is an NAD(+) binding site. Residues 203–208 (GLGAVG), Asp227, Arg232, Thr273, Val296, 296–298 (VGV), and Arg373 contribute to the NAD(+) site.

This sequence belongs to the zinc-containing alcohol dehydrogenase family. As to quaternary structure, homodimer. Zn(2+) serves as cofactor.

It is found in the cytoplasm. It catalyses the reaction a primary alcohol + NAD(+) = an aldehyde + NADH + H(+). It carries out the reaction a secondary alcohol + NAD(+) = a ketone + NADH + H(+). This chain is Alcohol dehydrogenase 1 (ADH1), found in Trifolium repens (Creeping white clover).